Consider the following 144-residue polypeptide: Ribosomal RNA large subunit methyltransferase H (144 aa).

S-adenosyl-L-methionine contacts are provided by residues leucine 63, glycine 92, and 111–116; that span reads LSPLTF.

The protein belongs to the RNA methyltransferase RlmH family. In terms of assembly, homodimer.

It is found in the cytoplasm. It catalyses the reaction pseudouridine(1915) in 23S rRNA + S-adenosyl-L-methionine = N(3)-methylpseudouridine(1915) in 23S rRNA + S-adenosyl-L-homocysteine + H(+). Specifically methylates the pseudouridine at position 1915 (m3Psi1915) in 23S rRNA. The polypeptide is Ribosomal RNA large subunit methyltransferase H (Synechococcus sp. (strain CC9902)).